We begin with the raw amino-acid sequence, 417 residues long: Succinate--CoA ligase [ADP-forming] subunit beta, mitochondrial (417 aa).

The N-terminal 24 residues, 1-24 (MLRKLANQSLSVAGKWQQQQLRRL), are a transit peptide targeting the mitochondrion. The 244-residue stretch at 32–275 (AELMSKYGIN…SSQEDPREVA (244 aa)) folds into the ATP-grasp domain. ATP is bound by residues K71, 78–80 (GRG), and E138. Mg(2+) contacts are provided by N230 and D244. Substrate-binding positions include N295 and 352-354 (GIM).

Belongs to the succinate/malate CoA ligase beta subunit family. Heterodimer of an alpha and a beta subunit. Mg(2+) serves as cofactor. Expressed in roots, stems, flowers, leaves and fruits.

Its subcellular location is the mitochondrion. It carries out the reaction succinate + ATP + CoA = succinyl-CoA + ADP + phosphate. Its pathway is carbohydrate metabolism; tricarboxylic acid cycle; succinate from succinyl-CoA (ligase route): step 1/1. Succinyl-CoA synthetase functions in the citric acid cycle (TCA), coupling the hydrolysis of succinyl-CoA to the synthesis of ATP and thus represents the only step of substrate-level phosphorylation in the TCA. The beta subunit provides nucleotide specificity of the enzyme and binds the substrate succinate, while the binding sites for coenzyme A and phosphate are found in the alpha subunit. In Solanum lycopersicum (Tomato), this protein is Succinate--CoA ligase [ADP-forming] subunit beta, mitochondrial.